The sequence spans 383 residues: Adaptive-response sensory kinase SasA (383 aa).

The region spanning 152–365 (MVAHELRTPL…CFTFTVPIWQ (214 aa)) is the Histidine kinase domain. His-155 bears the Phosphohistidine; by autocatalysis mark.

As to quaternary structure, homooligomerizes. Interacts with KaiC. Participates in the KaiABC clock complex, whose core is composed of a KaiC homohexamer, 6 KaiB and up to 6 KaiA dimers. SasA and KaiB(fs) compete to bind to KaiC.

It carries out the reaction ATP + protein L-histidine = ADP + protein N-phospho-L-histidine.. In terms of biological role, member of the two-component regulatory system SasA/RpaA involved in genome-wide circadian gene expression. One of several clock output pathways. Participates in the Kai clock protein complex, the main circadian regulator in cyanobacteria, via its interaction with KaiC. KaiC enhances the autophosphorylation activity of SasA, which then transfers its phosphate group to RpaA to activate it. In addition to its output function, recruits fold-shifted KaiB (KaiB(fs)) to KaiC to cooperatively form the KaiB(6):KaiC(6) complex (independent of SasA kinase activity). Required for robustness of the circadian rhythm of gene expression and is involved in clock output, also required for adaptation to light/dark cycles. The sequence is that of Adaptive-response sensory kinase SasA from Parasynechococcus marenigrum (strain WH8102).